An 80-amino-acid polypeptide reads, in one-letter code: Large ribosomal subunit protein bL31B (80 aa).

It belongs to the bacterial ribosomal protein bL31 family. Type B subfamily. In terms of assembly, part of the 50S ribosomal subunit.

The sequence is that of Large ribosomal subunit protein bL31B from Oenococcus oeni (strain ATCC BAA-331 / PSU-1).